The primary structure comprises 354 residues: UDP-N-acetylglucosamine--N-acetylmuramyl-(pentapeptide) pyrophosphoryl-undecaprenol N-acetylglucosamine transferase (354 aa).

UDP-N-acetyl-alpha-D-glucosamine is bound by residues 11 to 13 (TAG), Arg164, Ser194, and Gln289.

The protein belongs to the glycosyltransferase 28 family. MurG subfamily.

The protein localises to the cell membrane. The enzyme catalyses di-trans,octa-cis-undecaprenyl diphospho-N-acetyl-alpha-D-muramoyl-L-alanyl-D-glutamyl-meso-2,6-diaminopimeloyl-D-alanyl-D-alanine + UDP-N-acetyl-alpha-D-glucosamine = di-trans,octa-cis-undecaprenyl diphospho-[N-acetyl-alpha-D-glucosaminyl-(1-&gt;4)]-N-acetyl-alpha-D-muramoyl-L-alanyl-D-glutamyl-meso-2,6-diaminopimeloyl-D-alanyl-D-alanine + UDP + H(+). It participates in cell wall biogenesis; peptidoglycan biosynthesis. Its function is as follows. Cell wall formation. Catalyzes the transfer of a GlcNAc subunit on undecaprenyl-pyrophosphoryl-MurNAc-pentapeptide (lipid intermediate I) to form undecaprenyl-pyrophosphoryl-MurNAc-(pentapeptide)GlcNAc (lipid intermediate II). The sequence is that of UDP-N-acetylglucosamine--N-acetylmuramyl-(pentapeptide) pyrophosphoryl-undecaprenol N-acetylglucosamine transferase from Clostridium botulinum (strain Loch Maree / Type A3).